The following is a 636-amino-acid chain: 1-deoxy-D-xylulose-5-phosphate synthase (636 aa).

Residues histidine 74 and 115-117 (GHA) each bind thiamine diphosphate. Aspartate 146 provides a ligand contact to Mg(2+). Thiamine diphosphate-binding positions include 147–148 (GA), asparagine 175, tyrosine 285, and glutamate 368. Asparagine 175 is a binding site for Mg(2+).

It belongs to the transketolase family. DXPS subfamily. In terms of assembly, homodimer. Requires Mg(2+) as cofactor. Thiamine diphosphate serves as cofactor.

The enzyme catalyses D-glyceraldehyde 3-phosphate + pyruvate + H(+) = 1-deoxy-D-xylulose 5-phosphate + CO2. It functions in the pathway metabolic intermediate biosynthesis; 1-deoxy-D-xylulose 5-phosphate biosynthesis; 1-deoxy-D-xylulose 5-phosphate from D-glyceraldehyde 3-phosphate and pyruvate: step 1/1. In terms of biological role, catalyzes the acyloin condensation reaction between C atoms 2 and 3 of pyruvate and glyceraldehyde 3-phosphate to yield 1-deoxy-D-xylulose-5-phosphate (DXP). This is 1-deoxy-D-xylulose-5-phosphate synthase from Anaeromyxobacter dehalogenans (strain 2CP-1 / ATCC BAA-258).